A 245-amino-acid chain; its full sequence is tRNA pseudouridine synthase A 2 (245 aa).

Catalysis depends on aspartate 53, which acts as the Nucleophile. Tyrosine 111 is a substrate binding site.

The protein belongs to the tRNA pseudouridine synthase TruA family. Homodimer.

The enzyme catalyses uridine(38/39/40) in tRNA = pseudouridine(38/39/40) in tRNA. Its function is as follows. Formation of pseudouridine at positions 38, 39 and 40 in the anticodon stem and loop of transfer RNAs. This Bacillus thuringiensis subsp. konkukian (strain 97-27) protein is tRNA pseudouridine synthase A 2.